A 464-amino-acid chain; its full sequence is MAIIRSVIAATALLGAAVNAQVVGTPFGFGAGTTGGGDATPAAPADTAELTEWLADDEPRVILIDKEFNFLGDECTDCECCIPDSNTCGDAGQNAIEVGIGWCGDYPTTTCTYDNAGLDGLDVGPNKSIVGVGDAGVIRGKGLRIHGTENVIVQNIHITELNPQYIWGGDAISLDGADKVWIDHVKISLVGRQMFVTGYESSGSVTFSNNELDGTTDWSASCDGHHYWTILALGENDKVTFANNYIHTTSGRAPKVGAPSFWHVYNNYWSDNTGHAFDVEESGTNVFIEGNVFEDINSAYNDDGTGAIFAVDSGSEATCSSVLGRTCVANSLTNSEYTAVADESVLSAFPADEEGDITILPVDQVAAYVLANAGVGKLSASGSTSGSSSSIAPSSSVPVIPTSTPLVYPTFTPPAVETNAIQKEHEVSTPAVPTPTPVPSSVGSHGSTAGSSHPPAFSRTSFES.

The signal sequence occupies residues 1-20 (MAIIRSVIAATALLGAAVNA). Cys80 and Cys103 are oxidised to a cystine. An N-linked (GlcNAc...) asparagine glycan is attached at Asn126. The active site involves Arg252. The cysteines at positions 319 and 327 are disulfide-linked. Residues 424-464 (EHEVSTPAVPTPTPVPSSVGSHGSTAGSSHPPAFSRTSFES) form a disordered region. The segment covering 439 to 448 (PSSVGSHGST) has biased composition (low complexity).

Belongs to the polysaccharide lyase 1 family.

The protein resides in the secreted. It catalyses the reaction Eliminative cleavage of (1-&gt;4)-alpha-D-galacturonan methyl ester to give oligosaccharides with 4-deoxy-6-O-methyl-alpha-D-galact-4-enuronosyl groups at their non-reducing ends.. Its function is as follows. Pectinolytic enzymes consist of four classes of enzymes: pectin lyase, polygalacturonase, pectin methylesterase and rhamnogalacturonase. Among pectinolytic enzymes, pectin lyase is the most important in depolymerization of pectin, since it cleaves internal glycosidic bonds of highly methylated pectins. The sequence is that of Probable pectin lyase F (pelF) from Emericella nidulans (strain FGSC A4 / ATCC 38163 / CBS 112.46 / NRRL 194 / M139) (Aspergillus nidulans).